The following is a 146-amino-acid chain: D-aminoacyl-tRNA deacylase (146 aa).

A Gly-cisPro motif, important for rejection of L-amino acids motif is present at residues 137 to 138 (GP).

It belongs to the DTD family. As to quaternary structure, homodimer.

The protein resides in the cytoplasm. It carries out the reaction glycyl-tRNA(Ala) + H2O = tRNA(Ala) + glycine + H(+). The catalysed reaction is a D-aminoacyl-tRNA + H2O = a tRNA + a D-alpha-amino acid + H(+). In terms of biological role, an aminoacyl-tRNA editing enzyme that deacylates mischarged D-aminoacyl-tRNAs. Also deacylates mischarged glycyl-tRNA(Ala), protecting cells against glycine mischarging by AlaRS. Acts via tRNA-based rather than protein-based catalysis; rejects L-amino acids rather than detecting D-amino acids in the active site. By recycling D-aminoacyl-tRNA to D-amino acids and free tRNA molecules, this enzyme counteracts the toxicity associated with the formation of D-aminoacyl-tRNA entities in vivo and helps enforce protein L-homochirality. The polypeptide is D-aminoacyl-tRNA deacylase (Bacillus cereus (strain B4264)).